The sequence spans 238 residues: Doublecortin domain-containing protein (238 aa).

A partial p25alpha domain region spans residues 82 to 112; that stretch reads VFERLNDKQFYTGVQKTKFMELLKNNKNKSS. The Doublecortin domain occupies 151–232; that stretch reads KTIFLFNNEK…GDPPAPIRNL (82 aa).

In terms of assembly, interacts with alpha-tubulin 1 and beta-tubulin; the interaction stabilizes microtubule assembly.

The protein resides in the cytoplasm. It is found in the cytoskeleton. In terms of biological role, involved in the stabilization of microtubules. Probably by controlling microtubules stabilization, plays a role in invasion, microneme secretion and parasite growth in host erythrocytes. This chain is Doublecortin domain-containing protein, found in Plasmodium falciparum (isolate 3D7).